The primary structure comprises 475 residues: 3-hydroxyadipyl-CoA dehydrogenase (475 aa).

It belongs to the 3-hydroxyacyl-CoA dehydrogenase family. Homotrimer.

The enzyme catalyses (3S)-3-hydroxyadipyl-CoA + NAD(+) = 3-oxoadipyl-CoA + NADH + H(+). The protein operates within aromatic compound metabolism; phenylacetate degradation. Functionally, catalyzes the oxidation of 3-hydroxyadipyl-CoA to yield 3-oxoadipyl-CoA. The polypeptide is 3-hydroxyadipyl-CoA dehydrogenase (paaH) (Escherichia coli (strain K12)).